The chain runs to 96 residues: Large ribosomal subunit protein eL14 (96 aa).

It belongs to the eukaryotic ribosomal protein eL14 family.

This is Large ribosomal subunit protein eL14 from Metallosphaera sedula (strain ATCC 51363 / DSM 5348 / JCM 9185 / NBRC 15509 / TH2).